The following is a 425-amino-acid chain: Meiotic recombination protein spo-11 (425 aa).

The tract at residues 1–38 (MYEYSFNPNIDHEPGSVESQQSTIYSDSDDSDDSFLDD) is disordered. A Topo IIA-type catalytic domain is found at 15 to 158 (GSVESQQSTI…LNILSCGRGI (144 aa)). Over residues 27–38 (DSDDSDDSFLDD) the composition is skewed to acidic residues. The O-(5'-phospho-DNA)-tyrosine intermediate role is filled by Tyr-119. Residues Glu-202 and Asp-255 each contribute to the Mg(2+) site.

It belongs to the TOP6A family. The cofactor is Mg(2+).

Its subcellular location is the nucleus. It catalyses the reaction ATP-dependent breakage, passage and rejoining of double-stranded DNA.. Required for meiotic recombination. Mediates DNA cleavage that forms the double-strand breaks (DSB) that initiate meiotic recombination. The chain is Meiotic recombination protein spo-11 (spo-11) from Caenorhabditis elegans.